Reading from the N-terminus, the 195-residue chain is Elongation factor P (195 aa).

Belongs to the elongation factor P family.

It localises to the cytoplasm. It participates in protein biosynthesis; polypeptide chain elongation. Functionally, involved in peptide bond synthesis. Stimulates efficient translation and peptide-bond synthesis on native or reconstituted 70S ribosomes in vitro. Probably functions indirectly by altering the affinity of the ribosome for aminoacyl-tRNA, thus increasing their reactivity as acceptors for peptidyl transferase. The protein is Elongation factor P of Rhodopirellula baltica (strain DSM 10527 / NCIMB 13988 / SH1).